Consider the following 205-residue polypeptide: Beta-crystallin B2 (205 aa).

Alanine 2 is modified (N-acetylalanine). Residues 2–16 (ASDHQTQAGKPQPLN) form an N-terminal arm region. 2 consecutive Beta/gamma crystallin 'Greek key' domains span residues 17-56 (PKIIIFEQENFQGHSHELSGPCPNLKETGMEKAGSVLVQA) and 57-101 (GPWV…RPIK). The interval 102 to 106 (VDSQE) is connecting peptide. Beta/gamma crystallin 'Greek key' domains lie at 107 to 148 (HKII…RVQS) and 149 to 191 (GTWV…RRIR). The tract at residues 193–205 (MQWHQRGAFHPSS) is C-terminal arm.

The protein belongs to the beta/gamma-crystallin family. In terms of assembly, homo/heterodimer, or complexes of higher-order. The structure of beta-crystallin oligomers seems to be stabilized through interactions between the N-terminal arms.

Crystallins are the dominant structural components of the vertebrate eye lens. In Mesocricetus auratus (Golden hamster), this protein is Beta-crystallin B2 (CRYBB2).